A 60-amino-acid polypeptide reads, in one-letter code: Large ribosomal subunit protein uL30 (60 aa).

Belongs to the universal ribosomal protein uL30 family. As to quaternary structure, part of the 50S ribosomal subunit.

The sequence is that of Large ribosomal subunit protein uL30 from Leuconostoc citreum (strain KM20).